The primary structure comprises 691 residues: Elongation factor G (691 aa).

The 275-residue stretch at 8–282 (ERVRNIGIAA…AVVDYLPAPV (275 aa)) folds into the tr-type G domain. GTP is bound by residues 17 to 24 (AHIDAGKT), 81 to 85 (DTPGH), and 135 to 138 (NKMD).

This sequence belongs to the TRAFAC class translation factor GTPase superfamily. Classic translation factor GTPase family. EF-G/EF-2 subfamily.

The protein localises to the cytoplasm. Functionally, catalyzes the GTP-dependent ribosomal translocation step during translation elongation. During this step, the ribosome changes from the pre-translocational (PRE) to the post-translocational (POST) state as the newly formed A-site-bound peptidyl-tRNA and P-site-bound deacylated tRNA move to the P and E sites, respectively. Catalyzes the coordinated movement of the two tRNA molecules, the mRNA and conformational changes in the ribosome. This Prochlorococcus marinus (strain MIT 9312) protein is Elongation factor G.